Reading from the N-terminus, the 503-residue chain is von Willebrand factor A domain-containing protein 1 (503 aa).

An N-terminal signal peptide occupies residues 1-21; sequence MEVRKALTCVFLTVFLCSGDA. The VWFA domain occupies 36–213; sequence DVLFLLDSSG…IIGEDLRNSI (178 aa). Fibronectin type-III domains lie at 218 to 324 and 331 to 423; these read RAER…TVNP and LLSS…VLPA.

Homodimer or homomultimer; disulfide-linked.

Its subcellular location is the secreted. It is found in the extracellular space. The protein localises to the extracellular matrix. It localises to the basement membrane. Promotes matrix assembly. Involved in the organization of skeletal muscles and in the formation of neuromuscular junctions. The sequence is that of von Willebrand factor A domain-containing protein 1 from Danio rerio (Zebrafish).